Here is a 498-residue protein sequence, read N- to C-terminus: Probable FAD-binding monooxygenase AlmA (498 aa).

A helical transmembrane segment spans residues 4–24; the sequence is HIDILIVGAGISGIGIAAHLS. The FAD site is built by serine 15, glutamate 36, aspartate 56, phenylalanine 62, and valine 104. 54–56 provides a ligand contact to NADP(+); it reads RSD. Residues 184-190, 208-209, and 292-293 contribute to the NADP(+) site; these read SGATAIT, RS, and RL. Residue valine 395 participates in FAD binding.

It belongs to the FAD-binding monooxygenase family. FAD serves as cofactor.

It is found in the cell membrane. It participates in hydrocarbon metabolism; alkane degradation. Its function is as follows. Is able to catalyze the degradation of n-alkanes with C chain lengths of 32 and 36. Probably allows Acinetobacter baylyi strain ADP1 to grow on the long-chain n-alkane dotriacontane (C32H66) as a sole carbon source. This is Probable FAD-binding monooxygenase AlmA from Acinetobacter baylyi (strain ATCC 33305 / BD413 / ADP1).